The following is a 144-amino-acid chain: Protein SprT-like (144 aa).

Residues 4-143 (NKYVQEVSLQ…GKCRGKLTLK (140 aa)) enclose the SprT-like domain. H64 contributes to the Zn(2+) binding site. E65 is an active-site residue. H68 is a binding site for Zn(2+).

The protein belongs to the SprT family. The cofactor is Zn(2+).

It localises to the cytoplasm. This Streptococcus suis (strain 98HAH33) protein is Protein SprT-like.